Reading from the N-terminus, the 317-residue chain is Acetyl-coenzyme A carboxylase carboxyl transferase subunit alpha (317 aa).

In terms of domain architecture, CoA carboxyltransferase C-terminal spans 39-293 (RLETKAREAL…GDAIADALSQ (255 aa)).

This sequence belongs to the AccA family. In terms of assembly, acetyl-CoA carboxylase is a heterohexamer composed of biotin carboxyl carrier protein (AccB), biotin carboxylase (AccC) and two subunits each of ACCase subunit alpha (AccA) and ACCase subunit beta (AccD).

The protein resides in the cytoplasm. The catalysed reaction is N(6)-carboxybiotinyl-L-lysyl-[protein] + acetyl-CoA = N(6)-biotinyl-L-lysyl-[protein] + malonyl-CoA. It participates in lipid metabolism; malonyl-CoA biosynthesis; malonyl-CoA from acetyl-CoA: step 1/1. Functionally, component of the acetyl coenzyme A carboxylase (ACC) complex. First, biotin carboxylase catalyzes the carboxylation of biotin on its carrier protein (BCCP) and then the CO(2) group is transferred by the carboxyltransferase to acetyl-CoA to form malonyl-CoA. This is Acetyl-coenzyme A carboxylase carboxyl transferase subunit alpha from Xanthobacter autotrophicus (strain ATCC BAA-1158 / Py2).